Consider the following 133-residue polypeptide: S-protein homolog 21 (133 aa).

A signal peptide spans 1–21 (MKNLSIFLFVVGLCMISDVYG).

Belongs to the plant self-incompatibility (S1) protein family.

The protein localises to the secreted. The sequence is that of S-protein homolog 21 from Arabidopsis thaliana (Mouse-ear cress).